A 229-amino-acid polypeptide reads, in one-letter code: UPF0173 metal-dependent hydrolase SSP1060 (229 aa).

This sequence belongs to the UPF0173 family.

The chain is UPF0173 metal-dependent hydrolase SSP1060 from Staphylococcus saprophyticus subsp. saprophyticus (strain ATCC 15305 / DSM 20229 / NCIMB 8711 / NCTC 7292 / S-41).